Consider the following 65-residue polypeptide: Large ribosomal subunit protein bL35 (65 aa).

Residues 1–26 (MPKIKTVRGAAKRFKKTASGGFKRKQ) are disordered. Basic residues predominate over residues 10–26 (AAKRFKKTASGGFKRKQ).

It belongs to the bacterial ribosomal protein bL35 family.

The sequence is that of Large ribosomal subunit protein bL35 from Actinobacillus succinogenes (strain ATCC 55618 / DSM 22257 / CCUG 43843 / 130Z).